The sequence spans 314 residues: Acetyl-coenzyme A carboxylase carboxyl transferase subunit alpha (314 aa).

Residues 38–292 form the CoA carboxyltransferase C-terminal domain; it reads RLERKSAALL…ANAIDEELDA (255 aa).

Belongs to the AccA family. In terms of assembly, acetyl-CoA carboxylase is a heterohexamer composed of biotin carboxyl carrier protein (AccB), biotin carboxylase (AccC) and two subunits each of ACCase subunit alpha (AccA) and ACCase subunit beta (AccD).

The protein resides in the cytoplasm. The enzyme catalyses N(6)-carboxybiotinyl-L-lysyl-[protein] + acetyl-CoA = N(6)-biotinyl-L-lysyl-[protein] + malonyl-CoA. It participates in lipid metabolism; malonyl-CoA biosynthesis; malonyl-CoA from acetyl-CoA: step 1/1. Component of the acetyl coenzyme A carboxylase (ACC) complex. First, biotin carboxylase catalyzes the carboxylation of biotin on its carrier protein (BCCP) and then the CO(2) group is transferred by the carboxyltransferase to acetyl-CoA to form malonyl-CoA. This is Acetyl-coenzyme A carboxylase carboxyl transferase subunit alpha from Erythrobacter litoralis (strain HTCC2594).